Here is a 205-residue protein sequence, read N- to C-terminus: Small ribosomal subunit protein uS4 (205 aa).

The 64-residue stretch at 94-157 (SRLDTVVYRM…QQIPLIQESI (64 aa)) folds into the S4 RNA-binding domain.

It belongs to the universal ribosomal protein uS4 family. Part of the 30S ribosomal subunit. Contacts protein S5. The interaction surface between S4 and S5 is involved in control of translational fidelity.

In terms of biological role, one of the primary rRNA binding proteins, it binds directly to 16S rRNA where it nucleates assembly of the body of the 30S subunit. With S5 and S12 plays an important role in translational accuracy. The polypeptide is Small ribosomal subunit protein uS4 (Rickettsia typhi (strain ATCC VR-144 / Wilmington)).